Consider the following 873-residue polypeptide: Zinc fingers and homeoboxes protein 1 (873 aa).

Residues 1–63 (MASRRKSTTP…ESVDSDNQQN (63 aa)) are disordered. Residues 18 to 30 (QDPDLELISDLEE) show a composition bias toward acidic residues. Thr36 carries the post-translational modification Phosphothreonine. Residues Ser45, Ser47, and Ser48 each carry the phosphoserine modification. 2 consecutive C2H2-type zinc fingers follow at residues 70 to 93 (YECK…DSEH) and 102 to 125 (YVCV…LKYH). A Glycyl lysine isopeptide (Lys-Gly) (interchain with G-Cter in SUMO2) cross-link involves residue Lys159. The interval 198-247 (VHHNSAEGTSEEKENGVKASREENAENTSSSASESNTSTSTVNQVHPSPA) is disordered. Ser202 is modified (phosphoserine). Residues 207–221 (SEEKENGVKASREEN) show a composition bias toward basic and acidic residues. Low complexity predominate over residues 223-238 (ENTSSSASESNTSTST). Positions 272-432 (NSNLVPKVLI…QTNVQKSQVP (161 aa)) are required for dimerization. The required for interaction with NFYA stretch occupies residues 272–564 (NSNLVPKVLI…SQPKQSWNPF (293 aa)). The segment at residues 284–346 (NSIPTYNAAL…LKHGVSWTPE (63 aa)) is a DNA-binding region (homeobox 1). The interval 430-455 (QVPAAQPAAETKPATAAVPSSPSVRP) is disordered. Residues Lys441 and Lys485 each participate in a glycyl lysine isopeptide (Lys-Gly) (interchain with G-Cter in SUMO2) cross-link. A DNA-binding region (homeobox 2) is located at residues 464–526 (SFGIRAKKTK…YNQRNSKSNQ (63 aa)). 3 disordered regions span residues 540–568 (IDSS…PDFA), 627–664 (DEKV…TGKI), and 731–767 (SSSL…KRMN). Residues 551 to 560 (AAAASQPKQS) are compositionally biased toward low complexity. A DNA-binding region (homeobox 3) is located at residues 569 to 631 (PQKFKEKTAE…TKALKDEKVE (63 aa)). Lys629 participates in a covalent cross-link: Glycyl lysine isopeptide (Lys-Gly) (interchain with G-Cter in SUMO2). Phosphoserine is present on Ser648. The homeobox 4 DNA-binding region spans 660-722 (GTGKICKKTP…YAWKNGNLKW (63 aa)). The segment at 734–768 (LNGLSSLRKRGRGRPKGRGRGRPRGRPRGGKRMNT) is required for nuclear localization. The span at 740–764 (LRKRGRGRPKGRGRGRPRGRPRGGK) shows a compositional bias: basic residues. Ser774 carries the post-translational modification Phosphoserine. Residues 777–832 (KFKTGTAILKDYYLKHKFLNEQDLDELVNRSHMGYEQVREWFAERQRRSELGIELF) constitute a DNA-binding region (homeobox 5). The interval 829–873 (IELFEENEEEDEVIDDQEEDEEETDDSDTWEPPRHVKRKLSKSDD) is disordered. Acidic residues predominate over residues 831–857 (LFEENEEEDEVIDDQEEDEEETDDSDT). Residues 831–873 (LFEENEEEDEVIDDQEEDEEETDDSDTWEPPRHVKRKLSKSDD) form a required for repressor activity region. Basic residues predominate over residues 863–873 (HVKRKLSKSDD).

This sequence belongs to the ZHX family. In terms of assembly, forms homodimers. Heterodimer (via HD1 domain) with ZHX2 (via HD1 domain). Also forms a heterodimer with ZHX3 which is a prerequisite for repressor activity. Interacts with ATF7IP and NFYA. Interacts (via homeobox domains) with DNMT3B (via PWWP domain). As to expression, ubiquitously expressed.

The protein localises to the nucleus. Its function is as follows. Acts as a transcriptional repressor. Increases DNMT3B-mediated repressive transcriptional activity when DNMT3B is tethered to DNA. May link molecule between DNMT3B and other co-repressor proteins. In Rattus norvegicus (Rat), this protein is Zinc fingers and homeoboxes protein 1 (Zhx1).